The primary structure comprises 293 residues: ADP-forming sulfoacetate-CoA ligase subunit SauD (293 aa).

CoA contacts are provided by residues 17–20 (TGKE), K43, and 96–98 (IAD). H251 (tele-phosphohistidine intermediate) is an active-site residue.

Belongs to the succinate/malate CoA ligase alpha subunit family. As to quaternary structure, forms a complex with SauC.

The enzyme catalyses sulfoacetate + ATP + CoA = sulfoacetyl-CoA + ADP + phosphate. In terms of biological role, involved in the degradation of sulfoacetate. Catalyzes the CoA- and ATP-dependent conversion of sulfoacetate to sulfoacetyl-CoA and ADP. Cannot use other sulfonic and carboxylic acids, and shows only residual activity with 3-sulfopropanoate and malonic acid. The chain is ADP-forming sulfoacetate-CoA ligase subunit SauD from Bilophila wadsworthia (strain 3_1_6).